A 767-amino-acid polypeptide reads, in one-letter code: Cadherin-5 (767 aa).

An N-terminal signal peptide occupies residues methionine 1–glycine 29. Residues valine 30–arginine 51 constitute a propeptide that is removed on maturation. Topologically, residues valine 30–serine 593 are extracellular. Positions 62, 63, 113, and 115 each coordinate Ca(2+). Cadherin domains are found at residues arginine 86–phenylalanine 155, phenylalanine 155–phenylalanine 261, lysine 262–phenylalanine 373, asparagine 374–leucine 475, and leucine 475–tyrosine 581. Residue asparagine 121 is glycosylated (N-linked (GlcNAc...) asparagine). 7 residues coordinate Ca(2+): aspartate 147, isoleucine 148, asparagine 149, aspartate 150, asparagine 151, aspartate 180, and aspartate 182. The N-linked (GlcNAc...) asparagine glycan is linked to asparagine 197. Ca(2+) is bound at residue aspartate 233. 3 N-linked (GlcNAc...) asparagine glycosylation sites follow: asparagine 374, asparagine 477, and asparagine 518. A helical membrane pass occupies residues alanine 594–leucine 614. The Cytoplasmic portion of the chain corresponds to arginine 615–tyrosine 767.

It is found in the cell membrane. It localises to the cell junction. Its subcellular location is the adherens junction. Functionally, cadherins are calcium-dependent cell adhesion proteins. They preferentially interact with themselves in a homophilic manner in connecting cells; cadherins may thus contribute to the sorting of heterogeneous cell types. Required for embryonic cardiac looping and heart chamber development, via promotion of cell-cell junction formation and subsequent attachment between the endothelial and myocardial layers of the heart. Required for the directional migration and delamination of endothelial cell monolayers, by which common cardinal veins form via the lumen ensheathment mechanism of vessel development as they migrate and connect with the heart inflow tract. Required for the formation of filopodia extensions (sprouts) at the initiation of intersegmental vessel development, by acting (via its C-terminus) to facilitate anchoring of the actin cytoskeleton to cell junctions in endothelial cells. Then positively regulates dorsal migration of stalk cells and sprout outgrowth towards the dorsal longitudinal anastomotic vessels (DLAV) via endothelial cell elongation. Following contact with the DLAV, required for intersegmental vessel lumen formation, potentially via facilitating the formation and/or extension of endothelial cell tight junctions that are required during tubulogenesis. The protein is Cadherin-5 of Danio rerio (Zebrafish).